Consider the following 449-residue polypeptide: Tubulin alpha-2B chain (449 aa).

Residue Gln11 coordinates GTP. Lys40 is subject to N6-acetyllysine. GTP contacts are provided by Glu71, Ser140, Gly144, Thr145, Thr179, Asn206, and Asn228. Glu71 contacts Mg(2+). Glu254 is a catalytic residue.

The protein belongs to the tubulin family. As to quaternary structure, dimer of alpha and beta chains. A typical microtubule is a hollow water-filled tube with an outer diameter of 25 nm and an inner diameter of 15 nM. Alpha-beta heterodimers associate head-to-tail to form protofilaments running lengthwise along the microtubule wall with the beta-tubulin subunit facing the microtubule plus end conferring a structural polarity. Microtubules usually have 13 protofilaments but different protofilament numbers can be found in some organisms and specialized cells. Requires Mg(2+) as cofactor. Post-translationally, acetylation of alpha chains at Lys-40 stabilizes microtubules and affects affinity and processivity of microtubule motors. This modification has a role in multiple cellular functions, ranging from cell motility, cell cycle progression or cell differentiation to intracellular trafficking and signaling.

Its subcellular location is the cytoplasm. It is found in the cytoskeleton. It localises to the spindle. The protein resides in the nucleus. It catalyses the reaction GTP + H2O = GDP + phosphate + H(+). Functionally, tubulin is the major constituent of microtubules, a cylinder consisting of laterally associated linear protofilaments composed of alpha- and beta-tubulin heterodimers. Microtubules grow by the addition of GTP-tubulin dimers to the microtubule end, where a stabilizing cap forms. Below the cap, tubulin dimers are in GDP-bound state, owing to GTPase activity of alpha-tubulin. This is Tubulin alpha-2B chain (ALTBE) from Physarum polycephalum (Slime mold).